The chain runs to 181 residues: Mitochondrial inner membrane protein Mpv17 (181 aa).

The next 4 helical transmembrane spans lie at 20–37, 51–67, 86–103, and 152–169; these read MCIAGTISGSGDCLAQYL, FSFLSSCFMAPSLFIWF, LCIDQLCFSPCFNAAILF, and VILNQVVAFFWNCYLSYI.

The protein belongs to the peroxisomal membrane protein PXMP2/4 family.

It is found in the mitochondrion inner membrane. Functionally, involved in mitochondria homeostasis. The chain is Mitochondrial inner membrane protein Mpv17 from Caenorhabditis elegans.